The primary structure comprises 1241 residues: Putative ABC transporter B family member 8 (1241 aa).

A helical membrane pass occupies residues 24–44; it reads FADWIDIVLMVLGSVGAIGDG. In terms of domain architecture, ABC transmembrane type-1 1 spans 33–323; the sequence is MVLGSVGAIG…ALTEIRYFSE (291 aa). N-linked (GlcNAc...) asparagine glycosylation occurs at Asn48. A run of 5 helical transmembrane segments spans residues 82–102, 157–177, 183–203, 263–283, and 297–317; these read LYFVYLGLAILGVAFMEGYCW, VPIFLMHISVFITGLVFSAYF, VVAIPTLVLLLIPGLIYGKYL, GLAVGSSGISFTIWAFLAWYG, and IYAAGISFVLGGISLGTALTE. In terms of domain architecture, ABC transporter 1 spans 360–596; sequence VEFERVTLVY…NNHYAKLVKL (237 aa). 395-402 contributes to the ATP binding site; sequence GASGSGKS. N-linked (GlcNAc...) asparagine glycans are attached at residues Asn571, Asn632, and Asn648. The 289-residue stretch at 676–964 folds into the ABC transmembrane type-1 2 domain; it reads SLVGCISATT…AGSMTSDLAK (289 aa). 2 consecutive transmembrane segments (helical) span residues 686 to 706 and 716 to 736; these read FGAIQPVYALSIGGMISAFFA and IHIYSLIFISLTFLSITLNLL. N-linked (GlcNAc...) asparagine glycosylation is present at Asn773. 2 consecutive transmembrane segments (helical) span residues 797–815 and 821–838; these read ISLLVQTISGVTIAMIIGL and LALVMIAVQPLSILCFYT. Asn855 is a glycosylation site (N-linked (GlcNAc...) asparagine). 2 helical membrane passes run 899 to 919 and 933 to 953; these read AWLAGFGMGSAQCLTFLTWAL and ISAGDVFKTFFVLVSTGKVIA. One can recognise an ABC transporter 2 domain in the interval 998–1236; sequence IELKNIDFSY…GGQFSRLAHA (239 aa). 1033–1040 provides a ligand contact to ATP; it reads GTSGCGKS. Asn1187 is a glycosylation site (N-linked (GlcNAc...) asparagine).

This sequence belongs to the ABC transporter superfamily. ABCB family. Multidrug resistance exporter (TC 3.A.1.201) subfamily.

It localises to the membrane. The polypeptide is Putative ABC transporter B family member 8 (ABCB8) (Arabidopsis thaliana (Mouse-ear cress)).